The chain runs to 100 residues: Integration host factor subunit alpha (100 aa).

It belongs to the bacterial histone-like protein family. As to quaternary structure, heterodimer of an alpha and a beta chain.

Its function is as follows. This protein is one of the two subunits of integration host factor, a specific DNA-binding protein that functions in genetic recombination as well as in transcriptional and translational control. The sequence is that of Integration host factor subunit alpha from Alcanivorax borkumensis (strain ATCC 700651 / DSM 11573 / NCIMB 13689 / SK2).